A 105-amino-acid polypeptide reads, in one-letter code: Small ribosomal subunit protein uS10 (105 aa).

It belongs to the universal ribosomal protein uS10 family. As to quaternary structure, part of the 30S ribosomal subunit.

In terms of biological role, involved in the binding of tRNA to the ribosomes. In Synechococcus elongatus (strain ATCC 33912 / PCC 7942 / FACHB-805) (Anacystis nidulans R2), this protein is Small ribosomal subunit protein uS10.